Consider the following 115-residue polypeptide: Photosystem II reaction center Psb28 protein (115 aa).

It belongs to the Psb28 family. As to quaternary structure, part of the photosystem II complex.

It localises to the plastid. Its subcellular location is the chloroplast thylakoid membrane. The polypeptide is Photosystem II reaction center Psb28 protein (Pyropia yezoensis (Susabi-nori)).